The primary structure comprises 160 residues: Baculoviral IAP repeat-containing protein 5.1 (160 aa).

A BIR repeat occupies 27–97; it reads RLATFADWPF…KRSASCGFLS (71 aa). Threonine 43 is subject to Phosphothreonine; by CDK1. Zn(2+) contacts are provided by cysteine 66, cysteine 69, histidine 86, and cysteine 93.

The protein belongs to the IAP family. As to quaternary structure, component of the CPC at least composed of survivin/birc5, incenp, cdca8/borealin and/or cdca9/dasra-A, and aurkb/aurora-B. Interacts directly with incenp (via N-terminus), and may weakly interact with aurkb (via N-terminus) to stabilize the complex. Interacts with GTP-bound ran in both the S and M phases of the cell cycle. Also found in a complex with ubiquitin-mediated signaling proteins including at least usp9x/xFAM, nploc4/npl4 and ufd1. In terms of processing, ubiquitination is required for centrosome-targeting.

The protein localises to the cytoplasm. It localises to the nucleus. It is found in the chromosome. The protein resides in the centromere. Its subcellular location is the cytoskeleton. The protein localises to the spindle. In terms of biological role, component of the chromosomal passenger complex (CPC), a complex that acts as a key regulator of mitosis. The CPC complex has essential functions at the centromere in ensuring correct chromosome alignment and segregation and is required for chromatin-induced microtubule stabilization and spindle assembly. Stimulates the mitotic kinase activity of aurkb/aurora-B in the CPC. Does not appear to exhibit anti-apoptotic activity. This is Baculoviral IAP repeat-containing protein 5.1 (birc5.1) from Xenopus tropicalis (Western clawed frog).